The primary structure comprises 561 residues: Potassium-transporting ATPase potassium-binding subunit (561 aa).

The next 10 membrane-spanning stretches (helical) occupy residues 4–24 (IVMQ…PLGI), 65–85 (AVSV…VLML), 133–153 (IGLT…LFAV), 177–197 (LYIL…QGVV), 253–273 (FTNL…VVMF), 285–305 (AIMT…TISE), 380–400 (GLYG…LLVG), 417–437 (MVCL…AVAV), 484–504 (MVGA…ALYL), and 528–548 (FIGL…LPAL).

This sequence belongs to the KdpA family. The system is composed of three essential subunits: KdpA, KdpB and KdpC.

It is found in the cell membrane. Part of the high-affinity ATP-driven potassium transport (or Kdp) system, which catalyzes the hydrolysis of ATP coupled with the electrogenic transport of potassium into the cytoplasm. This subunit binds the extracellular potassium ions and delivers the ions to the membrane domain of KdpB through an intramembrane tunnel. In Listeria monocytogenes serotype 4b (strain CLIP80459), this protein is Potassium-transporting ATPase potassium-binding subunit.